A 169-amino-acid polypeptide reads, in one-letter code: 3-hydroxyanthranilate 3,4-dioxygenase (169 aa).

Arginine 44 lines the O2 pocket. Fe cation is bound by residues histidine 48, glutamate 54, and histidine 92. Glutamate 54 contributes to the substrate binding site. The substrate site is built by arginine 96 and glutamate 106. A divalent metal cation is bound by residues cysteine 121, cysteine 124, cysteine 158, and cysteine 160.

It belongs to the 3-HAO family. Fe(2+) is required as a cofactor.

The protein localises to the cytoplasm. The catalysed reaction is 3-hydroxyanthranilate + O2 = (2Z,4Z)-2-amino-3-carboxymuconate 6-semialdehyde. Its pathway is cofactor biosynthesis; NAD(+) biosynthesis; quinolinate from L-kynurenine: step 3/3. Its function is as follows. Catalyzes the oxidative ring opening of 3-hydroxyanthranilate to 2-amino-3-carboxymuconate semialdehyde, which spontaneously cyclizes to quinolinate. This chain is 3-hydroxyanthranilate 3,4-dioxygenase, found in Meyerozyma guilliermondii (strain ATCC 6260 / CBS 566 / DSM 6381 / JCM 1539 / NBRC 10279 / NRRL Y-324) (Yeast).